The chain runs to 504 residues: MRVNPDELTKVIEERIKSYESGEIKEIGWVMQVSDGIVRAYGLKDVMTNELVEIETSEGEKIYGIAMNLEEDNVGIITLGDYKGIKEGDKLVRTNRIIEVPVGEKLLGRVVNPLGMPLDGKGEINTDDFYPIERKAMGVVTRKPVDTPLQTGLKVLDALIPIGRGQRELIIGDRQTGKTAIATDTIINQKGKNVFCIYVSIGQKSSGLARTIDNLEKYGAMDYTVVVAADASDPASLQYIAPYAGAAIGEYFMFNGKDALVIYDDLTKHAAAYREISLLLRRPPGREAYPGDIFYLHSRLLERASRLNENYGNGSLTALPIIETQANDISAYIPTNVISITDGQIYLETGLFNAGIRPAVNIGLSVSRVGGDAQTKAMKRVAGSLKLDLAQYRELESFTQFAADLDEATKKQLTKGEKLTELMKQPQYSPMEMEEQVAVIYAANEGYLDQIPTDRISDFERQFLAYLKENYRDTLNKIRESKDIADEIKKELNEAISKFLNVFR.

172-179 (GDRQTGKT) is a binding site for ATP.

Belongs to the ATPase alpha/beta chains family. In terms of assembly, F-type ATPases have 2 components, CF(1) - the catalytic core - and CF(0) - the membrane proton channel. CF(1) has five subunits: alpha(3), beta(3), gamma(1), delta(1), epsilon(1). CF(0) has three main subunits: a(1), b(2) and c(9-12). The alpha and beta chains form an alternating ring which encloses part of the gamma chain. CF(1) is attached to CF(0) by a central stalk formed by the gamma and epsilon chains, while a peripheral stalk is formed by the delta and b chains.

The protein resides in the cell inner membrane. The enzyme catalyses ATP + H2O + 4 H(+)(in) = ADP + phosphate + 5 H(+)(out). In terms of biological role, produces ATP from ADP in the presence of a proton gradient across the membrane. The alpha chain is a regulatory subunit. The protein is ATP synthase subunit alpha of Petrotoga mobilis (strain DSM 10674 / SJ95).